A 146-amino-acid chain; its full sequence is 3-dehydroquinate dehydratase (146 aa).

Residue Tyr24 is the Proton acceptor of the active site. Substrate-binding residues include Asn75, His81, and Asp88. Catalysis depends on His101, which acts as the Proton donor. Residues 102–103 (LS) and Arg112 contribute to the substrate site.

It belongs to the type-II 3-dehydroquinase family. In terms of assembly, homododecamer.

It catalyses the reaction 3-dehydroquinate = 3-dehydroshikimate + H2O. The protein operates within metabolic intermediate biosynthesis; chorismate biosynthesis; chorismate from D-erythrose 4-phosphate and phosphoenolpyruvate: step 3/7. Catalyzes a trans-dehydration via an enolate intermediate. The chain is 3-dehydroquinate dehydratase from Maricaulis maris (strain MCS10) (Caulobacter maris).